Here is a 367-residue protein sequence, read N- to C-terminus: Queuine tRNA-ribosyltransferase (367 aa).

The active-site Proton acceptor is Asp92. Residues 92-96 (DSGGF), Asp146, Gln188, and Gly215 contribute to the substrate site. An RNA binding region spans residues 246–252 (GVGTPKD). The active-site Nucleophile is Asp265. Positions 303, 305, 308, and 334 each coordinate Zn(2+).

It belongs to the queuine tRNA-ribosyltransferase family. In terms of assembly, homodimer. Within each dimer, one monomer is responsible for RNA recognition and catalysis, while the other monomer binds to the replacement base PreQ1. Zn(2+) is required as a cofactor.

The catalysed reaction is 7-aminomethyl-7-carbaguanine + guanosine(34) in tRNA = 7-aminomethyl-7-carbaguanosine(34) in tRNA + guanine. It functions in the pathway tRNA modification; tRNA-queuosine biosynthesis. In terms of biological role, catalyzes the base-exchange of a guanine (G) residue with the queuine precursor 7-aminomethyl-7-deazaguanine (PreQ1) at position 34 (anticodon wobble position) in tRNAs with GU(N) anticodons (tRNA-Asp, -Asn, -His and -Tyr). Catalysis occurs through a double-displacement mechanism. The nucleophile active site attacks the C1' of nucleotide 34 to detach the guanine base from the RNA, forming a covalent enzyme-RNA intermediate. The proton acceptor active site deprotonates the incoming PreQ1, allowing a nucleophilic attack on the C1' of the ribose to form the product. After dissociation, two additional enzymatic reactions on the tRNA convert PreQ1 to queuine (Q), resulting in the hypermodified nucleoside queuosine (7-(((4,5-cis-dihydroxy-2-cyclopenten-1-yl)amino)methyl)-7-deazaguanosine). The sequence is that of Queuine tRNA-ribosyltransferase from Francisella tularensis subsp. novicida (strain U112).